The chain runs to 229 residues: 2-C-methyl-D-erythritol 4-phosphate cytidylyltransferase (229 aa).

It belongs to the IspD/TarI cytidylyltransferase family. IspD subfamily.

It catalyses the reaction 2-C-methyl-D-erythritol 4-phosphate + CTP + H(+) = 4-CDP-2-C-methyl-D-erythritol + diphosphate. It functions in the pathway isoprenoid biosynthesis; isopentenyl diphosphate biosynthesis via DXP pathway; isopentenyl diphosphate from 1-deoxy-D-xylulose 5-phosphate: step 2/6. In terms of biological role, catalyzes the formation of 4-diphosphocytidyl-2-C-methyl-D-erythritol from CTP and 2-C-methyl-D-erythritol 4-phosphate (MEP). The sequence is that of 2-C-methyl-D-erythritol 4-phosphate cytidylyltransferase from Clostridium botulinum (strain Loch Maree / Type A3).